A 612-amino-acid polypeptide reads, in one-letter code: FAD-linked oxidoreductase easE (612 aa).

Residues 129 to 313 (HQGRIPLYSA…TRATMRVFPD (185 aa)) enclose the FAD-binding PCMH-type domain.

This sequence belongs to the oxygen-dependent FAD-linked oxidoreductase family. Requires FAD as cofactor.

The protein operates within alkaloid biosynthesis; ergot alkaloid biosynthesis. In terms of biological role, FAD-linked oxidoreductase; part of the gene cluster that mediates the biosynthesis of fungal ergot alkaloid. DmaW catalyzes the first step of ergot alkaloid biosynthesis by condensing dimethylallyl diphosphate (DMAP) and tryptophan to form 4-dimethylallyl-L-tryptophan. The second step is catalyzed by the methyltransferase easF that methylates 4-dimethylallyl-L-tryptophan in the presence of S-adenosyl-L-methionine, resulting in the formation of 4-dimethylallyl-L-abrine. The catalase easC and the FAD-dependent oxidoreductase easE then transform 4-dimethylallyl-L-abrine to chanoclavine-I which is further oxidized by easD in the presence of NAD(+), resulting in the formation of chanoclavine-I aldehyde. Chanoclavine-I aldehyde is the precursor of ergoamides and ergopeptines in Clavicipitaceae, and clavine-type alcaloids such as fumiclavine in Trichocomaceae. However, the metabolites downstream of chanoclavine-I aldehyde in Arthrodermataceae have not been identified yet. This Arthroderma otae (strain ATCC MYA-4605 / CBS 113480) (Microsporum canis) protein is FAD-linked oxidoreductase easE.